The sequence spans 705 residues: Polyribonucleotide nucleotidyltransferase (705 aa).

Asp492 and Asp498 together coordinate Mg(2+). One can recognise a KH domain in the interval 559–618 (PLMITMKVSPDKIRHIIGPGGKIINKIIDETGVEIDIDDDGSVYILAQDQESGNRAKEII). Residues 628–696 (GDIYEGRVKK…ELGRINLSRK (69 aa)) enclose the S1 motif domain.

It belongs to the polyribonucleotide nucleotidyltransferase family. Requires Mg(2+) as cofactor.

The protein resides in the cytoplasm. It catalyses the reaction RNA(n+1) + phosphate = RNA(n) + a ribonucleoside 5'-diphosphate. Involved in mRNA degradation. Catalyzes the phosphorolysis of single-stranded polyribonucleotides processively in the 3'- to 5'-direction. The chain is Polyribonucleotide nucleotidyltransferase from Halothermothrix orenii (strain H 168 / OCM 544 / DSM 9562).